Reading from the N-terminus, the 299-residue chain is Probable lipid kinase YegS (299 aa).

Residues 2 to 133 (ANFPASLLIL…IDMARVNDKT (132 aa)) form the DAGKc domain. ATP contacts are provided by residues Thr-40, 66–72 (GDGTINE), and Thr-95. The Mg(2+) site is built by Leu-215, Asp-218, and Leu-220. Glu-271 serves as the catalytic Proton acceptor.

Belongs to the diacylglycerol/lipid kinase family. YegS lipid kinase subfamily. The cofactor is Mg(2+). It depends on Ca(2+) as a cofactor.

The protein localises to the cytoplasm. In terms of biological role, probably phosphorylates lipids; the in vivo substrate is unknown. This is Probable lipid kinase YegS from Salmonella agona (strain SL483).